A 129-amino-acid chain; its full sequence is Small ribosomal subunit protein uS11 (129 aa).

This sequence belongs to the universal ribosomal protein uS11 family. As to quaternary structure, part of the 30S ribosomal subunit. Interacts with proteins S7 and S18. Binds to IF-3.

Functionally, located on the platform of the 30S subunit, it bridges several disparate RNA helices of the 16S rRNA. Forms part of the Shine-Dalgarno cleft in the 70S ribosome. The sequence is that of Small ribosomal subunit protein uS11 from Rhodopseudomonas palustris (strain BisB5).